Reading from the N-terminus, the 87-residue chain is Small ribosomal subunit protein bS20 (87 aa).

The segment at 1–20 is disordered; that stretch reads MANHKSAEKRARQTIKKTER.

The protein belongs to the bacterial ribosomal protein bS20 family.

Binds directly to 16S ribosomal RNA. This chain is Small ribosomal subunit protein bS20, found in Campylobacter jejuni subsp. jejuni serotype O:2 (strain ATCC 700819 / NCTC 11168).